We begin with the raw amino-acid sequence, 248 residues long: DNA repair protein RecO (248 aa).

The protein belongs to the RecO family.

Involved in DNA repair and RecF pathway recombination. The polypeptide is DNA repair protein RecO (Bacillus cereus (strain 03BB102)).